The following is a 425-amino-acid chain: tRNA(Ile)-lysidine synthase (425 aa).

27-32 (SGGLDS) serves as a coordination point for ATP.

The protein belongs to the tRNA(Ile)-lysidine synthase family.

Its subcellular location is the cytoplasm. It catalyses the reaction cytidine(34) in tRNA(Ile2) + L-lysine + ATP = lysidine(34) in tRNA(Ile2) + AMP + diphosphate + H(+). Ligates lysine onto the cytidine present at position 34 of the AUA codon-specific tRNA(Ile) that contains the anticodon CAU, in an ATP-dependent manner. Cytidine is converted to lysidine, thus changing the amino acid specificity of the tRNA from methionine to isoleucine. This chain is tRNA(Ile)-lysidine synthase, found in Streptococcus pneumoniae (strain 70585).